Consider the following 355-residue polypeptide: Elongation factor Ts (355 aa).

The involved in Mg(2+) ion dislocation from EF-Tu stretch occupies residues 82–85; sequence TDFV.

Belongs to the EF-Ts family.

The protein localises to the cytoplasm. In terms of biological role, associates with the EF-Tu.GDP complex and induces the exchange of GDP to GTP. It remains bound to the aminoacyl-tRNA.EF-Tu.GTP complex up to the GTP hydrolysis stage on the ribosome. In Helicobacter pylori (strain J99 / ATCC 700824) (Campylobacter pylori J99), this protein is Elongation factor Ts (tsf).